The primary structure comprises 479 residues: Aspartyl/glutamyl-tRNA(Asn/Gln) amidotransferase subunit B (479 aa).

The protein belongs to the GatB/GatE family. GatB subfamily. Heterotrimer of A, B and C subunits.

The enzyme catalyses L-glutamyl-tRNA(Gln) + L-glutamine + ATP + H2O = L-glutaminyl-tRNA(Gln) + L-glutamate + ADP + phosphate + H(+). It carries out the reaction L-aspartyl-tRNA(Asn) + L-glutamine + ATP + H2O = L-asparaginyl-tRNA(Asn) + L-glutamate + ADP + phosphate + 2 H(+). Allows the formation of correctly charged Asn-tRNA(Asn) or Gln-tRNA(Gln) through the transamidation of misacylated Asp-tRNA(Asn) or Glu-tRNA(Gln) in organisms which lack either or both of asparaginyl-tRNA or glutaminyl-tRNA synthetases. The reaction takes place in the presence of glutamine and ATP through an activated phospho-Asp-tRNA(Asn) or phospho-Glu-tRNA(Gln). The chain is Aspartyl/glutamyl-tRNA(Asn/Gln) amidotransferase subunit B from Streptococcus pyogenes serotype M49 (strain NZ131).